We begin with the raw amino-acid sequence, 1060 residues long: Valine--tRNA ligase, mitochondrial (1060 aa).

A mitochondrion-targeting transit peptide spans 1–15 (MPHLPLASFRPPLWG). The segment at 25–50 (PQALCTQPEPHGSPVSRRNREAKQKR) is disordered. The short motif at 146–156 (PNVTGSLHIGH) is the 'HIGH' region element. Lys-548 bears the N6-acetyllysine mark. The 'KMSKS' region signature appears at 659–663 (KMSKS). Residue Lys-662 participates in ATP binding.

Belongs to the class-I aminoacyl-tRNA synthetase family.

The protein resides in the mitochondrion. It catalyses the reaction tRNA(Val) + L-valine + ATP = L-valyl-tRNA(Val) + AMP + diphosphate. Functionally, catalyzes the attachment of valine to tRNA(Val) in a two-step reaction: valine is first activated by ATP to form Val-AMP and then transferred to the acceptor end of tRNA(Val). This is Valine--tRNA ligase, mitochondrial (Vars2) from Mus musculus (Mouse).